The chain runs to 272 residues: Undecaprenyl-diphosphatase (272 aa).

The next 7 membrane-spanning stretches (helical) occupy residues 22–42, 45–65, 92–112, 118–138, 189–209, 228–248, and 251–271; these read FLPV…GFTG, AETF…VVFW, SHII…HDVI, PQSV…AEIL, YTAS…ASGL, VGFV…LALI, and ISFI…YWVF.

It belongs to the UppP family.

It localises to the cell inner membrane. The catalysed reaction is di-trans,octa-cis-undecaprenyl diphosphate + H2O = di-trans,octa-cis-undecaprenyl phosphate + phosphate + H(+). In terms of biological role, catalyzes the dephosphorylation of undecaprenyl diphosphate (UPP). Confers resistance to bacitracin. This chain is Undecaprenyl-diphosphatase, found in Photorhabdus laumondii subsp. laumondii (strain DSM 15139 / CIP 105565 / TT01) (Photorhabdus luminescens subsp. laumondii).